Consider the following 665-residue polypeptide: Alpha-1,4-glucan:maltose-1-phosphate maltosyltransferase (665 aa).

Alpha-maltose 1-phosphate-binding residues include K255, Q315, and D350. D386 acts as the Nucleophile in catalysis. N387 is a binding site for alpha-maltose 1-phosphate. E415 serves as the catalytic Proton donor. 526–527 (KY) contacts alpha-maltose 1-phosphate.

Belongs to the glycosyl hydrolase 13 family. GlgE subfamily. Homodimer.

It catalyses the reaction alpha-maltose 1-phosphate + [(1-&gt;4)-alpha-D-glucosyl](n) = [(1-&gt;4)-alpha-D-glucosyl](n+2) + phosphate. Functionally, maltosyltransferase that uses maltose 1-phosphate (M1P) as the sugar donor to elongate linear or branched alpha-(1-&gt;4)-glucans. Is involved in a branched alpha-glucan biosynthetic pathway from trehalose, together with TreS, Mak and GlgB. This chain is Alpha-1,4-glucan:maltose-1-phosphate maltosyltransferase, found in Myxococcus xanthus (strain DK1622).